A 211-amino-acid polypeptide reads, in one-letter code: Large ribosomal subunit protein uL3 (211 aa).

Residues 116–142 are disordered; that stretch reads GTSGVMKKHGFSGNRASHGVSRNHRLG.

It belongs to the universal ribosomal protein uL3 family. As to quaternary structure, part of the 50S ribosomal subunit. Forms a cluster with proteins L14 and L19.

Functionally, one of the primary rRNA binding proteins, it binds directly near the 3'-end of the 23S rRNA, where it nucleates assembly of the 50S subunit. The sequence is that of Large ribosomal subunit protein uL3 from Fusobacterium nucleatum subsp. nucleatum (strain ATCC 25586 / DSM 15643 / BCRC 10681 / CIP 101130 / JCM 8532 / KCTC 2640 / LMG 13131 / VPI 4355).